The chain runs to 258 residues: Proliferating cell nuclear antigen (258 aa).

The DNA-binding element occupies 61 to 80 (RCDHPVTLGMDLTSLSKILR). Residue Lys-127 forms a Glycyl lysine isopeptide (Lys-Gly) (interchain with G-Cter in SUMO) linkage. Lys-164 participates in a covalent cross-link: Glycyl lysine isopeptide (Lys-Gly) (interchain with G-Cter in SUMO); alternate. Residue Lys-164 forms a Glycyl lysine isopeptide (Lys-Gly) (interchain with G-Cter in ubiquitin); alternate linkage.

The protein belongs to the PCNA family. In terms of assembly, homotrimer. Interacts with RAD30. Interacts with MCM10. Interacts with UBP10. Post-translationally, sumoylated on Lys-164, and to a lesser extent on Lys-127 by the UBC9/SIZ1 complex during S-phase; which impairs ubiquitination and function in DNA repair. In terms of processing, monoubiquitinated on Lys-164 by the UBC2/RAD18 complex upon DNA damage, and then polyubiquitinated through 'Lys-63'-linkage by UBC13/MMS2. Ubiquitination is required for UBC2-mediated DNA repair. Lys-164 is deubiquitinated by UBP10.

The protein resides in the nucleus. This protein is an auxiliary protein of DNA polymerase delta and is involved in the control of eukaryotic DNA replication by increasing the polymerase's processibility during elongation of the leading strand. Involved in DNA repair. The polypeptide is Proliferating cell nuclear antigen (POL30) (Saccharomyces cerevisiae (strain ATCC 204508 / S288c) (Baker's yeast)).